A 299-amino-acid polypeptide reads, in one-letter code: Lathosterol oxidase (299 aa).

3 helical membrane passes run 32–52, 79–99, and 117–137; these read VSLL…CATL, FTVK…LLEL, and IHLI…IYWI. In terms of domain architecture, Fatty acid hydroxylase spans 124–252; sequence ISFLFFTDML…YFTLWDRIGG (129 aa). The short motif at 138–143 is the Histidine box-1 element; it reads HRGLHH. The Histidine box-2 signature appears at 151–155; the sequence is HKPHH. Positions 228 to 233 match the Histidine box-3 motif; the sequence is HHTDHH. Phosphoserine is present on Ser253.

The protein belongs to the sterol desaturase family. It depends on Fe cation as a cofactor.

The protein localises to the endoplasmic reticulum membrane. The enzyme catalyses a Delta(7)-sterol + 2 Fe(II)-[cytochrome b5] + O2 + 2 H(+) = a Delta(5),Delta(7)-sterol + 2 Fe(III)-[cytochrome b5] + 2 H2O. It catalyses the reaction lathosterol + 2 Fe(II)-[cytochrome b5] + O2 + 2 H(+) = 7-dehydrocholesterol + 2 Fe(III)-[cytochrome b5] + 2 H2O. The catalysed reaction is 5alpha-cholesta-7,24-dien-3beta-ol + 2 Fe(II)-[cytochrome b5] + O2 + 2 H(+) = 7-dehydrodesmosterol + 2 Fe(III)-[cytochrome b5] + 2 H2O. The protein operates within steroid biosynthesis; cholesterol biosynthesis. Its function is as follows. Catalyzes the penultimate step of the biosynthesis of cholesterol, the dehydrogenation of lathosterol into 7-dehydrocholesterol (7-DHC). Cholesterol is the major sterol component in mammalian membranes and a precursor for bile acid and steroid hormone synthesis. In addition to its essential role in cholesterol biosynthesis, it also indirectly regulates ferroptosis through the production of 7-DHC. By diverting the spread of damage caused by peroxyl radicals from the phospholipid components to its sterol nucleus, 7-DHC prevents this form of cell death. This Rattus norvegicus (Rat) protein is Lathosterol oxidase.